The following is a 132-amino-acid chain: Evasin P985 (132 aa).

An N-terminal signal peptide occupies residues 1 to 24 (MHSTIAYVSLLPLALFVAMHGAST). N-linked (GlcNAc...) asparagine glycans are attached at residues asparagine 45, asparagine 69, asparagine 74, asparagine 103, asparagine 111, and asparagine 117. Cystine bridges form between cysteine 48-cysteine 70, cysteine 66-cysteine 109, cysteine 83-cysteine 114, and cysteine 104-cysteine 123.

The protein resides in the secreted. Salivary chemokine-binding protein which binds to host chemokine CCL5. This chain is Evasin P985, found in Amblyomma parvum (South American tick).